The primary structure comprises 108 residues: Large ribosomal subunit protein uL24 (108 aa).

This sequence belongs to the universal ribosomal protein uL24 family. In terms of assembly, part of the 50S ribosomal subunit.

In terms of biological role, one of two assembly initiator proteins, it binds directly to the 5'-end of the 23S rRNA, where it nucleates assembly of the 50S subunit. Functionally, one of the proteins that surrounds the polypeptide exit tunnel on the outside of the subunit. The polypeptide is Large ribosomal subunit protein uL24 (Pelobacter propionicus (strain DSM 2379 / NBRC 103807 / OttBd1)).